We begin with the raw amino-acid sequence, 387 residues long: Phosphoglycerate kinase (387 aa).

Substrate contacts are provided by residues 21–23 (DLN), arginine 36, 59–62 (HLGR), arginine 113, and arginine 146. Residues lysine 197, glutamate 314, and 340 to 343 (GGDT) each bind ATP.

Belongs to the phosphoglycerate kinase family. As to quaternary structure, monomer.

Its subcellular location is the cytoplasm. It carries out the reaction (2R)-3-phosphoglycerate + ATP = (2R)-3-phospho-glyceroyl phosphate + ADP. Its pathway is carbohydrate degradation; glycolysis; pyruvate from D-glyceraldehyde 3-phosphate: step 2/5. In Pseudomonas fluorescens (strain Pf0-1), this protein is Phosphoglycerate kinase.